Here is a 112-residue protein sequence, read N- to C-terminus: MKEKTTQLYEGAYVFSVTLSEEARRKALEKVTSGIINYGGEILKIHDQGRKKLAYTIRGAREGYYYLIYFSVVPGVIAELWKEYHLNEDLLRFLTLKTDAVKEVLEFASLPE.

This sequence belongs to the bacterial ribosomal protein bS6 family.

In terms of biological role, binds together with bS18 to 16S ribosomal RNA. This Chlamydia felis (strain Fe/C-56) (Chlamydophila felis) protein is Small ribosomal subunit protein bS6.